Consider the following 273-residue polypeptide: tRNA pseudouridine synthase A (273 aa).

Catalysis depends on Asp52, which acts as the Nucleophile. Tyr110 contacts substrate.

Belongs to the tRNA pseudouridine synthase TruA family. Homodimer.

The enzyme catalyses uridine(38/39/40) in tRNA = pseudouridine(38/39/40) in tRNA. Its function is as follows. Formation of pseudouridine at positions 38, 39 and 40 in the anticodon stem and loop of transfer RNAs. The polypeptide is tRNA pseudouridine synthase A (Cupriavidus pinatubonensis (strain JMP 134 / LMG 1197) (Cupriavidus necator (strain JMP 134))).